A 513-amino-acid chain; its full sequence is ATP synthase subunit alpha (513 aa).

169 to 176 (GDRQCGKT) is a binding site for ATP.

Belongs to the ATPase alpha/beta chains family. In terms of assembly, F-type ATPases have 2 components, CF(1) - the catalytic core - and CF(0) - the membrane proton channel. CF(1) has five subunits: alpha(3), beta(3), gamma(1), delta(1), epsilon(1). CF(0) has three main subunits: a(1), b(2) and c(9-12). The alpha and beta chains form an alternating ring which encloses part of the gamma chain. CF(1) is attached to CF(0) by a central stalk formed by the gamma and epsilon chains, while a peripheral stalk is formed by the delta and b chains.

It is found in the cell inner membrane. The catalysed reaction is ATP + H2O + 4 H(+)(in) = ADP + phosphate + 5 H(+)(out). Produces ATP from ADP in the presence of a proton gradient across the membrane. The alpha chain is a regulatory subunit. The protein is ATP synthase subunit alpha of Burkholderia cenocepacia (strain ATCC BAA-245 / DSM 16553 / LMG 16656 / NCTC 13227 / J2315 / CF5610) (Burkholderia cepacia (strain J2315)).